Consider the following 61-residue polypeptide: Small ribosomal subunit protein uS14 (61 aa).

Zn(2+) is bound by residues C24, C27, C40, and C43.

It belongs to the universal ribosomal protein uS14 family. Zinc-binding uS14 subfamily. As to quaternary structure, part of the 30S ribosomal subunit. Contacts proteins S3 and S10. Zn(2+) serves as cofactor.

Its function is as follows. Binds 16S rRNA, required for the assembly of 30S particles and may also be responsible for determining the conformation of the 16S rRNA at the A site. The protein is Small ribosomal subunit protein uS14 of Trichlorobacter lovleyi (strain ATCC BAA-1151 / DSM 17278 / SZ) (Geobacter lovleyi).